The chain runs to 307 residues: MLFNLLVILGPTASGKTRLGVELARRFFGEVLSADSRQVYRGMDIGTGKDLSEYGEVPYHLIDIVDPGYEFNVFEFQRRFEQAYNHITERGKLPVMVGGTGMYLESVLKGYRLVEVPENAQLRRQLAGFSHEALMERLGNANPRLHNSTDLLDHHRLVRAIEIAEYEAPPQAPFLPGLSPLIFGIQWDRPILRQRITERLKLRLDQGMIQEVERLHDTGIPFETLEFYGLEYRFIARHLKGELSRNDMFQKLNSAIHDFAKRQCTWFSRMERHGTVIHWLDGAADPLAEALGILSHQKTQSTPFCRP.

An ATP-binding site is contributed by 10–17; it reads GPTASGKT. Substrate is bound at residue 12-17; it reads TASGKT. The tract at residues 35 to 38 is interaction with substrate tRNA; that stretch reads DSRQ.

The protein belongs to the IPP transferase family. As to quaternary structure, monomer. Requires Mg(2+) as cofactor.

It catalyses the reaction adenosine(37) in tRNA + dimethylallyl diphosphate = N(6)-dimethylallyladenosine(37) in tRNA + diphosphate. Its function is as follows. Catalyzes the transfer of a dimethylallyl group onto the adenine at position 37 in tRNAs that read codons beginning with uridine, leading to the formation of N6-(dimethylallyl)adenosine (i(6)A). The protein is tRNA dimethylallyltransferase 1 of Geotalea daltonii (strain DSM 22248 / JCM 15807 / FRC-32) (Geobacter daltonii).